A 308-amino-acid polypeptide reads, in one-letter code: UPF0282 protein M164_2122 (308 aa).

Belongs to the UPF0282 family.

The polypeptide is UPF0282 protein M164_2122 (Saccharolobus islandicus (strain M.16.4 / Kamchatka #3) (Sulfolobus islandicus)).